The sequence spans 64 residues: UPF0434 protein Bcep18194_A5877 (64 aa).

This sequence belongs to the UPF0434 family.

The chain is UPF0434 protein Bcep18194_A5877 from Burkholderia lata (strain ATCC 17760 / DSM 23089 / LMG 22485 / NCIMB 9086 / R18194 / 383).